A 204-amino-acid polypeptide reads, in one-letter code: Partner of Y14 and mago (204 aa).

2 disordered regions span residues 1 to 121 (MGSR…QSVN) and 133 to 153 (SSNN…EDVE). The segment covering 7–36 (EQGKRMAELSKNLKEGERILEPTRRPDGTL) has biased composition (basic and acidic residues). Over residues 104-121 (KANSSEDGSASNGSQSVN) the composition is skewed to polar residues. A Nuclear export signal motif is present at residues 195 to 200 (ELKALE).

Belongs to the pym family. Interacts with MAGO and Y14. As to expression, expressed in root and shoot meristems, cotyledons, vascular tissues of leaves, receptacle of flowers and siliques, and pollen grains.

Its subcellular location is the cytoplasm. It localises to the nucleus. The protein resides in the nucleolus. The protein localises to the nucleoplasm. Functionally, key regulator of the exon junction complex (EJC), a multiprotein complex that associates immediately upstream of the exon-exon junction on mRNAs and serves as a positional landmark for the intron exon structure of genes and directs post-transcriptional processes in the cytoplasm such as mRNA export, nonsense-mediated mRNA decay (NMD) or translation. Acts as an EJC disassembly factor, allowing translation-dependent EJC removal and recycling by disrupting mature EJC from spliced mRNAs. Can increase in vitro the expression from reporter constructs that contain leader introns required for the expression of different genes. In association with MAGO and PYM, participates in intron-mediated enhancement of gene expression. The sequence is that of Partner of Y14 and mago from Arabidopsis thaliana (Mouse-ear cress).